We begin with the raw amino-acid sequence, 252 residues long: Flagellar L-ring protein (252 aa).

The first 25 residues, 1–25 (MLKLASLNRIVLTGTLLAAAGLASG), serve as a signal peptide directing secretion. C26 is lipidated: N-palmitoyl cysteine. A lipid anchor (S-diacylglycerol cysteine) is attached at C26.

The protein belongs to the FlgH family. In terms of assembly, the basal body constitutes a major portion of the flagellar organelle and consists of four rings (L,P,S, and M) mounted on a central rod.

Its subcellular location is the cell outer membrane. It is found in the bacterial flagellum basal body. Its function is as follows. Assembles around the rod to form the L-ring and probably protects the motor/basal body from shearing forces during rotation. In Nitrobacter winogradskyi (strain ATCC 25391 / DSM 10237 / CIP 104748 / NCIMB 11846 / Nb-255), this protein is Flagellar L-ring protein.